Consider the following 597-residue polypeptide: CTP synthase (597 aa).

The interval 1–272 (MARPKNVKYV…DMRVLKKLGL (272 aa)) is amidoligase domain. Residue S18 coordinates CTP. S18 contacts UTP. 19-24 (SLGKGI) is an ATP binding site. L-glutamine is bound at residue Y59. D76 lines the ATP pocket. Positions 76 and 146 each coordinate Mg(2+). CTP is bound by residues 153–155 (DIE), 193–198 (KTKPTQ), and K229. UTP-binding positions include 193–198 (KTKPTQ) and K229. The Glutamine amidotransferase type-1 domain occupies 299–543 (NVAICGKYTE…VGAAKAYADG (245 aa)). G363 provides a ligand contact to L-glutamine. C390 serves as the catalytic Nucleophile; for glutamine hydrolysis. L-glutamine-binding positions include 391 to 394 (LGMQ), E414, and R471. Catalysis depends on residues H516 and E518.

This sequence belongs to the CTP synthase family. As to quaternary structure, homotetramer.

It carries out the reaction UTP + L-glutamine + ATP + H2O = CTP + L-glutamate + ADP + phosphate + 2 H(+). It catalyses the reaction L-glutamine + H2O = L-glutamate + NH4(+). The enzyme catalyses UTP + NH4(+) + ATP = CTP + ADP + phosphate + 2 H(+). The protein operates within pyrimidine metabolism; CTP biosynthesis via de novo pathway; CTP from UDP: step 2/2. Allosterically activated by GTP, when glutamine is the substrate; GTP has no effect on the reaction when ammonia is the substrate. The allosteric effector GTP functions by stabilizing the protein conformation that binds the tetrahedral intermediate(s) formed during glutamine hydrolysis. Inhibited by the product CTP, via allosteric rather than competitive inhibition. Functionally, catalyzes the ATP-dependent amination of UTP to CTP with either L-glutamine or ammonia as the source of nitrogen. Regulates intracellular CTP levels through interactions with the four ribonucleotide triphosphates. The chain is CTP synthase from Chlorobium luteolum (strain DSM 273 / BCRC 81028 / 2530) (Pelodictyon luteolum).